The following is a 423-amino-acid chain: Glycine amidinotransferase, mitochondrial (423 aa).

A mitochondrion-targeting transit peptide spans 1–43; it reads MLRVRCLRGGSRGAEAVHYIGSRLGRTLTGWVQRTFQSTQAAT. A phosphoserine mark is found at Ser46 and Ser49. Residue Asp170 participates in arginine binding. Catalysis depends on residues Asp254 and His303. Positions 305, 322, 354, and 355 each coordinate arginine. Lys385 bears the N6-acetyllysine mark. Cys407 acts as the Amidino-cysteine intermediate in catalysis.

This sequence belongs to the amidinotransferase family. As to quaternary structure, homodimer. There is an equilibrium between the monomeric and dimeric forms, shifted towards the side of the monomer. Expressed in brain, heart, kidney, liver, lung, salivary gland and skeletal muscle tissue, with the highest expression in kidney. Biallelically expressed in placenta and fetal tissues.

Its subcellular location is the mitochondrion inner membrane. The protein localises to the cytoplasm. It carries out the reaction L-arginine + glycine = guanidinoacetate + L-ornithine. The enzyme catalyses 4-aminobutanoate + L-arginine = 4-guanidinobutanoate + L-ornithine. The catalysed reaction is beta-alanine + L-arginine = 3-guanidinopropanoate + L-ornithine. It catalyses the reaction taurine + L-arginine = taurocyamine + L-ornithine. It participates in amine and polyamine biosynthesis; creatine biosynthesis; creatine from L-arginine and glycine: step 1/2. Transamidinase that catalyzes the transfer of the amidino group of L-arginine onto the amino moiety of acceptor metabolites such as glycine, beta-alanine, gamma-aminobutyric acid (GABA) and taurine yielding the corresponding guanidine derivatives. Catalyzes the rate-limiting step of creatine biosynthesis, namely the transfer of the amidino group from L-arginine to glycine to generate guanidinoacetate, which is then methylated by GAMT to form creatine. Provides creatine as a source for ATP generation in tissues with high energy demands, in particular skeletal muscle, heart and brain. The chain is Glycine amidinotransferase, mitochondrial (GATM) from Homo sapiens (Human).